The sequence spans 503 residues: Probable cytosol aminopeptidase (503 aa).

Mn(2+) is bound by residues Lys-268 and Asp-273. Residue Lys-280 is part of the active site. Asp-291, Asp-350, and Glu-352 together coordinate Mn(2+). Arg-354 is an active-site residue.

The protein belongs to the peptidase M17 family. Requires Mn(2+) as cofactor.

The protein localises to the cytoplasm. The enzyme catalyses Release of an N-terminal amino acid, Xaa-|-Yaa-, in which Xaa is preferably Leu, but may be other amino acids including Pro although not Arg or Lys, and Yaa may be Pro. Amino acid amides and methyl esters are also readily hydrolyzed, but rates on arylamides are exceedingly low.. It carries out the reaction Release of an N-terminal amino acid, preferentially leucine, but not glutamic or aspartic acids.. Functionally, presumably involved in the processing and regular turnover of intracellular proteins. Catalyzes the removal of unsubstituted N-terminal amino acids from various peptides. This chain is Probable cytosol aminopeptidase, found in Corynebacterium efficiens (strain DSM 44549 / YS-314 / AJ 12310 / JCM 11189 / NBRC 100395).